A 278-amino-acid chain; its full sequence is MGRKVHPIGFRLGIIKDWSAKWHASDKNFAECLTEDLKLRKAISKKYVDAAISQVDIERQSNKVTVSVRTARPGIVIGRGGQRVDEMRHFLEDLIGKKVQLNIVEISQAELDAFLVARSVAEQIERRVAYRRAMKQAIFRSMQAGAKGIKICASGRLGGVEIARREVMHEGRVPLHTLRADIDYGCTRAHTALGDVGIKVWVYRGDILPEAKEKSESEVTEMAAVMADAPAAVVTETKVADIAAKPKRVVKKAEAEIPAEEKPKRVVKKAENITKEEE.

The KH type-2 domain occupies 39-107 (LRKAISKKYV…KVQLNIVEIS (69 aa)). The interval 255-278 (AEIPAEEKPKRVVKKAENITKEEE) is disordered.

It belongs to the universal ribosomal protein uS3 family. In terms of assembly, part of the 30S ribosomal subunit. Forms a tight complex with proteins S10 and S14.

Binds the lower part of the 30S subunit head. Binds mRNA in the 70S ribosome, positioning it for translation. This chain is Small ribosomal subunit protein uS3, found in Dehalococcoides mccartyi (strain CBDB1).